The sequence spans 854 residues: Glucans biosynthesis glucosyltransferase H (854 aa).

Helical transmembrane passes span 155–175, 209–229, 528–548, 583–603, 619–639, 671–691, and 695–715; these read ILLALTLFQTAIATWYMKTIL, ILVLFAVLFCWVSAGFWTALM, VFLTGVMSYLSAPLWFMFLVL, IALFSTTLVLLFLPKLLSVIL, FLSLLLEMLFSVLLAPVRMLF, FVRHGSQLILGLVWAIGMAWL, and FLWWLSPIVFSLILSPVVSVY.

It belongs to the glycosyltransferase 2 family. OpgH subfamily.

It is found in the cell inner membrane. It participates in glycan metabolism; osmoregulated periplasmic glucan (OPG) biosynthesis. In terms of biological role, involved in the biosynthesis of osmoregulated periplasmic glucans (OPGs). The polypeptide is Glucans biosynthesis glucosyltransferase H (Pectobacterium atrosepticum (strain SCRI 1043 / ATCC BAA-672) (Erwinia carotovora subsp. atroseptica)).